Reading from the N-terminus, the 393-residue chain is MLTIGTALRPNATRVMLLGSGELGKEVAIECQRLGLEVIAVDRYADAPAMHVAHRSHVINMLDGAALKRLVAQEKPHYIVPEIEAIATDMLVELENMGQKVVPCAQATRLTMNREGIRLLAAETLQLPTSSYRFADTESAFRQAVSEIGYPCIVKPVMSSSGKGQSLIRSEPQLQAAWDYAQQGGRAGSGKVIVEGLVHFDFEITLLTISAVDGIHFCAPIGHRQEDGDYRESWQPQAMSDVAVARAKEIASQVVKALGGYGLFGVELFVCGDEVIFSEVSPRPHDTGMVTLISQNMSEFALHVRAFLGLPIGTIRQYGAAASAVILPELTSHNIAYHGLETALVGDTQIRLFGKPDIAGKRRLGVALAVADDTDTAIEIAKRAASAVVVTGK.

Residues 22–23 (EL) and glutamate 82 contribute to the N(1)-(5-phospho-beta-D-ribosyl)glycinamide site. Residues arginine 114, lysine 155, 160 to 165 (SSGKGQ), 195 to 198 (EGLV), and glutamate 203 each bind ATP. The ATP-grasp domain occupies 119–308 (LLAAETLQLP…EFALHVRAFL (190 aa)). Mg(2+) contacts are provided by glutamate 267 and glutamate 279. Residues aspartate 286, lysine 355, and 362–363 (RR) contribute to the N(1)-(5-phospho-beta-D-ribosyl)glycinamide site.

It belongs to the PurK/PurT family. As to quaternary structure, homodimer.

The enzyme catalyses N(1)-(5-phospho-beta-D-ribosyl)glycinamide + formate + ATP = N(2)-formyl-N(1)-(5-phospho-beta-D-ribosyl)glycinamide + ADP + phosphate + H(+). Its pathway is purine metabolism; IMP biosynthesis via de novo pathway; N(2)-formyl-N(1)-(5-phospho-D-ribosyl)glycinamide from N(1)-(5-phospho-D-ribosyl)glycinamide (formate route): step 1/1. Functionally, involved in the de novo purine biosynthesis. Catalyzes the transfer of formate to 5-phospho-ribosyl-glycinamide (GAR), producing 5-phospho-ribosyl-N-formylglycinamide (FGAR). Formate is provided by PurU via hydrolysis of 10-formyl-tetrahydrofolate. The chain is Formate-dependent phosphoribosylglycinamide formyltransferase from Yersinia enterocolitica serotype O:8 / biotype 1B (strain NCTC 13174 / 8081).